Here is a 340-residue protein sequence, read N- to C-terminus: Methionine import ATP-binding protein MetN (340 aa).

One can recognise an ABC transporter domain in the interval 5-243 (IEFRGVTKSF…PQTTTARRFV (239 aa)). 40–47 (GYSGAGKS) contributes to the ATP binding site.

The protein belongs to the ABC transporter superfamily. Methionine importer (TC 3.A.1.24) family. In terms of assembly, the complex is composed of two ATP-binding proteins (MetN), two transmembrane proteins (MetI) and a solute-binding protein (MetQ).

It is found in the cell membrane. The catalysed reaction is L-methionine(out) + ATP + H2O = L-methionine(in) + ADP + phosphate + H(+). It carries out the reaction D-methionine(out) + ATP + H2O = D-methionine(in) + ADP + phosphate + H(+). In terms of biological role, part of the ABC transporter complex MetNIQ involved in methionine import. Responsible for energy coupling to the transport system. This Leifsonia xyli subsp. xyli (strain CTCB07) protein is Methionine import ATP-binding protein MetN.